Consider the following 345-residue polypeptide: Phosphate acyltransferase (345 aa).

This sequence belongs to the PlsX family. Homodimer. Probably interacts with PlsY.

It is found in the cytoplasm. The enzyme catalyses a fatty acyl-[ACP] + phosphate = an acyl phosphate + holo-[ACP]. It functions in the pathway lipid metabolism; phospholipid metabolism. Functionally, catalyzes the reversible formation of acyl-phosphate (acyl-PO(4)) from acyl-[acyl-carrier-protein] (acyl-ACP). This enzyme utilizes acyl-ACP as fatty acyl donor, but not acyl-CoA. In Chromobacterium violaceum (strain ATCC 12472 / DSM 30191 / JCM 1249 / CCUG 213 / NBRC 12614 / NCIMB 9131 / NCTC 9757 / MK), this protein is Phosphate acyltransferase.